Here is a 162-residue protein sequence, read N- to C-terminus: Caveolin-2 (162 aa).

Over 1–86 the chain is Cytoplasmic; it reads MGLETEKADV…FEISKYVVYK (86 aa). Phosphotyrosine; by SRC is present on Tyr19. Phosphoserine is present on residues Ser20 and Ser23. Tyr27 carries the phosphotyrosine; by SRC modification. Phosphoserine is present on Ser36. The helical intramembrane region spans 87–107; the sequence is FLTVFLAIPLAFAAGILFATL. At 108–162 the chain is on the cytoplasmic side; sequence SCLHIWIIMPFVKTCLMVLPSVQTVWKTVTDVVIAPLCASVGRSFSSVSLQLSHD.

This sequence belongs to the caveolin family. Monomer or homodimer. Interacts with CAV1; the interaction forms a stable heterooligomeric complex that is required for targeting to lipid rafts and for caveolae formation. Tyrosine phosphorylated forms do not form heterooligomers with the Tyr-19-phosphorylated form existing as a monomer or dimer, and the Tyr-27-form as a monomer only. Interacts (tyrosine phosphorylated form) with the SH2 domain-containing proteins, RASA1, NCK1 and SRC. Interacts (tyrosine phosphorylated form) with INSR, the interaction (Tyr-27-phosphorylated form) is increased on insulin stimulation. Interacts (Tyr-19 phosphorylated form) with MAPK1 (phosphorylated form); the interaction, promoted by insulin, leads to nuclear location and MAPK1 activation. Interacts with STAT3; the interaction is increased on insulin-induced tyrosine phosphorylation leading to STAT activation. Post-translationally, phosphorylated on serine and tyrosine residues. CAV1 promotes phosphorylation on Ser-23 which then targets the complex to the plasma membrane, lipid rafts and caveolae. Phosphorylation on Ser-36 appears to modulate mitosis in endothelial cells. Phosphorylation on both Tyr-19 and Tyr-27 is required for insulin-induced 'Ser-727' phosphorylation of STAT3 and its activation. Phosphorylation on Tyr-19 is required for insulin-induced phosphorylation of MAPK1 and DNA binding of STAT3. Tyrosine phosphorylation is induced by both EGF and insulin (By. similarity).

Its subcellular location is the nucleus. The protein localises to the cytoplasm. The protein resides in the golgi apparatus membrane. It is found in the cell membrane. It localises to the membrane. Its subcellular location is the caveola. In terms of biological role, may act as a scaffolding protein within caveolar membranes. Interacts directly with G-protein alpha subunits and can functionally regulate their activity. Acts as an accessory protein in conjunction with CAV1 in targeting to lipid rafts and driving caveolae formation. The Ser-36 phosphorylated form has a role in modulating mitosis in endothelial cells. Positive regulator of cellular mitogenesis of the MAPK signaling pathway. Required for the insulin-stimulated nuclear translocation and activation of MAPK1 and STAT3, and the subsequent regulation of cell cycle progression. This chain is Caveolin-2 (CAV2), found in Loxodonta africana (African elephant).